A 460-amino-acid polypeptide reads, in one-letter code: NADH-ubiquinone oxidoreductase chain 4 (460 aa).

13 consecutive transmembrane segments (helical) span residues 22–42 (WLWP…LLWF), 59–79 (IDPL…LMIL), 93–113 (QRIY…AFSA), 114–134 (TELI…LIII), 148–168 (TYFL…LLLM), 195–215 (FWWT…GVHL), 225–245 (PIAG…YGMM), 258–278 (MAYP…SICL), 286–306 (LIAY…MIQT), 310–330 (FAGA…LFCL), 351–371 (VMLP…LALP), 394–414 (ILLT…MFLM), and 440–460 (LHLI…GWTF).

This sequence belongs to the complex I subunit 4 family.

The protein localises to the mitochondrion membrane. It carries out the reaction a ubiquinone + NADH + 5 H(+)(in) = a ubiquinol + NAD(+) + 4 H(+)(out). In terms of biological role, core subunit of the mitochondrial membrane respiratory chain NADH dehydrogenase (Complex I) that is believed to belong to the minimal assembly required for catalysis. Complex I functions in the transfer of electrons from NADH to the respiratory chain. The immediate electron acceptor for the enzyme is believed to be ubiquinone. This chain is NADH-ubiquinone oxidoreductase chain 4 (MT-ND4), found in Squalus acanthias (Spiny dogfish).